The primary structure comprises 59 residues: Large ribosomal subunit protein uL30 (59 aa).

The protein belongs to the universal ribosomal protein uL30 family. Part of the 50S ribosomal subunit.

In Histophilus somni (strain 129Pt) (Haemophilus somnus), this protein is Large ribosomal subunit protein uL30.